A 202-amino-acid chain; its full sequence is GTP cyclohydrolase 1 (202 aa).

Residues Cys90, His93, and Cys163 each coordinate Zn(2+).

Belongs to the GTP cyclohydrolase I family. In terms of assembly, homomer.

It carries out the reaction GTP + H2O = 7,8-dihydroneopterin 3'-triphosphate + formate + H(+). The protein operates within cofactor biosynthesis; 7,8-dihydroneopterin triphosphate biosynthesis; 7,8-dihydroneopterin triphosphate from GTP: step 1/1. The chain is GTP cyclohydrolase 1 from Mycobacterium marinum (strain ATCC BAA-535 / M).